The following is a 256-amino-acid chain: Imidazole glycerol phosphate synthase subunit HisF (256 aa).

Catalysis depends on residues Asp12 and Asp131.

Belongs to the HisA/HisF family. Heterodimer of HisH and HisF.

The protein resides in the cytoplasm. It carries out the reaction 5-[(5-phospho-1-deoxy-D-ribulos-1-ylimino)methylamino]-1-(5-phospho-beta-D-ribosyl)imidazole-4-carboxamide + L-glutamine = D-erythro-1-(imidazol-4-yl)glycerol 3-phosphate + 5-amino-1-(5-phospho-beta-D-ribosyl)imidazole-4-carboxamide + L-glutamate + H(+). It functions in the pathway amino-acid biosynthesis; L-histidine biosynthesis; L-histidine from 5-phospho-alpha-D-ribose 1-diphosphate: step 5/9. In terms of biological role, IGPS catalyzes the conversion of PRFAR and glutamine to IGP, AICAR and glutamate. The HisF subunit catalyzes the cyclization activity that produces IGP and AICAR from PRFAR using the ammonia provided by the HisH subunit. The polypeptide is Imidazole glycerol phosphate synthase subunit HisF (Beutenbergia cavernae (strain ATCC BAA-8 / DSM 12333 / CCUG 43141 / JCM 11478 / NBRC 16432 / NCIMB 13614 / HKI 0122)).